The primary structure comprises 104 residues: L-rhamnose mutarotase (104 aa).

Tyr-18 is a binding site for substrate. His-22 functions as the Proton donor in the catalytic mechanism. Substrate is bound by residues Tyr-41 and 76–77 (WW).

Belongs to the rhamnose mutarotase family. Homodimer.

The protein resides in the cytoplasm. The enzyme catalyses alpha-L-rhamnose = beta-L-rhamnose. Its pathway is carbohydrate metabolism; L-rhamnose metabolism. In terms of biological role, involved in the anomeric conversion of L-rhamnose. This Cronobacter sakazakii (strain ATCC BAA-894) (Enterobacter sakazakii) protein is L-rhamnose mutarotase.